The sequence spans 141 residues: Actin-depolymerizing factor 9 (141 aa).

The residue at position 8 (serine 8) is a Phosphoserine. The ADF-H domain maps to 8–141; the sequence is SGMWMTDDCK…GFDKIQDRAK (134 aa).

The protein belongs to the actin-binding proteins ADF family.

The protein localises to the cytoplasm. The protein resides in the cytoskeleton. Functionally, does not display typical F-actin depolymerizing activity. Exhibits a high ability to stabilize and cross-link actin filaments. Functions as an actin bundling protein with the highest efficiency under acidic conditions. May play a role in the modulation of levels of histone H3 lysine 4 trimethylation and H3 lysine 9 and 14 acetylation at the FLC locus. The polypeptide is Actin-depolymerizing factor 9 (ADF9) (Arabidopsis thaliana (Mouse-ear cress)).